Here is a 353-residue protein sequence, read N- to C-terminus: Nif-specific regulatory protein (353 aa).

A Sigma-54 factor interaction domain is found at 12 to 240; sequence IVGESAALKE…LQNCTQRTAT (229 aa). ATP is bound by residues 40 to 47 and 103 to 112; these read GESGTGKE and AHGGTLLLDE. The H-T-H motif DNA-binding region spans 325 to 344; that stretch reads QAKAARLLGRTPRQVGYSLR.

Interacts with sigma-54.

Functionally, required for activation of most nif operons, which are directly involved in nitrogen fixation. This chain is Nif-specific regulatory protein (nifA), found in Rhizobium leguminosarum bv. trifolii.